We begin with the raw amino-acid sequence, 380 residues long: Epoxyqueuosine reductase (380 aa).

D139 acts as the Proton donor in catalysis. One can recognise a 4Fe-4S ferredoxin-type 1 domain in the interval 181–213 (IPFEPDDPLLDSCGDCTICVDRCPTSALVGNGQ). [4Fe-4S] cluster is bound by residues C193, C196, C199, C203, C219, C245, C248, and C252. One can recognise a 4Fe-4S ferredoxin-type 2 domain in the interval 234-263 (YRYKIGNRLYGCDTCQQVCPKNRGINTEQD).

It belongs to the QueG family. As to quaternary structure, monomer. Cob(II)alamin is required as a cofactor. It depends on [4Fe-4S] cluster as a cofactor.

It localises to the cytoplasm. The enzyme catalyses epoxyqueuosine(34) in tRNA + AH2 = queuosine(34) in tRNA + A + H2O. The protein operates within tRNA modification; tRNA-queuosine biosynthesis. In terms of biological role, catalyzes the conversion of epoxyqueuosine (oQ) to queuosine (Q), which is a hypermodified base found in the wobble positions of tRNA(Asp), tRNA(Asn), tRNA(His) and tRNA(Tyr). In Staphylococcus aureus (strain NCTC 8325 / PS 47), this protein is Epoxyqueuosine reductase.